The primary structure comprises 177 residues: Putative pre-16S rRNA nuclease (177 aa).

It belongs to the YqgF nuclease family.

It localises to the cytoplasm. Could be a nuclease involved in processing of the 5'-end of pre-16S rRNA. The polypeptide is Putative pre-16S rRNA nuclease (Psychrobacter arcticus (strain DSM 17307 / VKM B-2377 / 273-4)).